Here is a 264-residue protein sequence, read N- to C-terminus: Glyceraldehyde-3-phosphate dehydrogenase (264 aa).

NAD(+) is bound by residues R45 and T93. D-glyceraldehyde 3-phosphate-binding positions include 123-125 and T154; that span reads SCT. C124 functions as the Nucleophile in the catalytic mechanism. Residue N155 coordinates NAD(+). Residues R169, 182–183, and R205 each bind D-glyceraldehyde 3-phosphate; that span reads TG. Residues 245-264 form a disordered region; that stretch reads GILGYTEDPXVSSDXKGNSH.

Belongs to the glyceraldehyde-3-phosphate dehydrogenase family. Homotetramer.

The protein resides in the cytoplasm. The catalysed reaction is D-glyceraldehyde 3-phosphate + phosphate + NAD(+) = (2R)-3-phospho-glyceroyl phosphate + NADH + H(+). The protein operates within carbohydrate degradation; glycolysis; pyruvate from D-glyceraldehyde 3-phosphate: step 1/5. Catalyzes the oxidative phosphorylation of glyceraldehyde 3-phosphate (G3P) to 1,3-bisphosphoglycerate (BPG) using the cofactor NAD. The first reaction step involves the formation of a hemiacetal intermediate between G3P and a cysteine residue, and this hemiacetal intermediate is then oxidized to a thioester, with concomitant reduction of NAD to NADH. The reduced NADH is then exchanged with the second NAD, and the thioester is attacked by a nucleophilic inorganic phosphate to produce BPG. This Borrelia hermsii protein is Glyceraldehyde-3-phosphate dehydrogenase (gap).